Consider the following 176-residue polypeptide: N-alpha-acetyltransferase NAT5 (176 aa).

Residues 14-176 (NNLGMLTKLA…DAILLKKHIS (163 aa)) form the N-acetyltransferase domain.

Belongs to the acetyltransferase family. Component of the N-terminal acetyltransferase A (NatA) complex, which is composed of ARD1, NAT1 and NAT5.

It localises to the cytoplasm. It catalyses the reaction N-terminal L-methionyl-L-alanyl-[protein] + acetyl-CoA = N-terminal N(alpha)-acetyl-L-methionyl-L-alanyl-[protein] + CoA + H(+). The catalysed reaction is N-terminal L-methionyl-L-seryl-[protein] + acetyl-CoA = N-terminal N(alpha)-acetyl-L-methionyl-L-seryl-[protein] + CoA + H(+). It carries out the reaction N-terminal L-methionyl-L-valyl-[protein] + acetyl-CoA = N-terminal N(alpha)-acetyl-L-methionyl-L-valyl-[protein] + CoA + H(+). The enzyme catalyses N-terminal L-methionyl-L-threonyl-[protein] + acetyl-CoA = N-terminal N(alpha)-acetyl-L-methionyl-L-threonyl-[protein] + CoA + H(+). It catalyses the reaction N-terminal L-methionyl-L-lysyl-[protein] + acetyl-CoA = N-terminal N(alpha)-acetyl-L-methionyl-L-lysyl-[protein] + CoA + H(+). The catalysed reaction is N-terminal L-methionyl-L-leucyl-[protein] + acetyl-CoA = N-terminal N(alpha)-acetyl-L-methionyl-L-leucyl-[protein] + CoA + H(+). It carries out the reaction N-terminal L-methionyl-L-phenylalanyl-[protein] + acetyl-CoA = N-terminal N(alpha)-acetyl-L-methionyl-L-phenylalanyl-[protein] + CoA + H(+). The enzyme catalyses N-terminal L-methionyl-L-tyrosyl-[protein] + acetyl-CoA = N-terminal N(alpha)-acetyl-L-methionyl-L-tyrosyl-[protein] + CoA + H(+). In terms of biological role, N-alpha-acetyltransferase that acetylates the N-terminus of proteins that retain their initiating methionine. Has a broad substrate specificity: able to acetylate the initiator methionine of most peptides. Non-essential component of the NatA N-terminal acetyltransferase. The sequence is that of N-alpha-acetyltransferase NAT5 from Saccharomyces cerevisiae (strain ATCC 204508 / S288c) (Baker's yeast).